We begin with the raw amino-acid sequence, 401 residues long: Serine/threonine transporter SstT (401 aa).

Transmembrane regions (helical) follow at residues 17–37, 40–60, 78–98, 138–158, 179–199, 212–232, 295–315, and 336–356; these read IGIG…ITVI, FGSL…LTLV, VICL…GASY, ALAT…GLAF, VVGW…FDTI, LLLL…NPLI, MAGA…TLGI, and ASGV…LFGI.

It belongs to the dicarboxylate/amino acid:cation symporter (DAACS) (TC 2.A.23) family.

It localises to the cell membrane. The enzyme catalyses L-serine(in) + Na(+)(in) = L-serine(out) + Na(+)(out). The catalysed reaction is L-threonine(in) + Na(+)(in) = L-threonine(out) + Na(+)(out). Its function is as follows. Involved in the import of serine and threonine into the cell, with the concomitant import of sodium (symport system). This Streptococcus suis (strain 98HAH33) protein is Serine/threonine transporter SstT.